Reading from the N-terminus, the 366-residue chain is UDP-N-acetylglucosamine--N-acetylmuramyl-(pentapeptide) pyrophosphoryl-undecaprenol N-acetylglucosamine transferase (366 aa).

Residues 14–16, Asn-125, Arg-168, Ser-196, and Gln-297 contribute to the UDP-N-acetyl-alpha-D-glucosamine site; that span reads TGG.

The protein belongs to the glycosyltransferase 28 family. MurG subfamily.

The protein resides in the cell inner membrane. It carries out the reaction di-trans,octa-cis-undecaprenyl diphospho-N-acetyl-alpha-D-muramoyl-L-alanyl-D-glutamyl-meso-2,6-diaminopimeloyl-D-alanyl-D-alanine + UDP-N-acetyl-alpha-D-glucosamine = di-trans,octa-cis-undecaprenyl diphospho-[N-acetyl-alpha-D-glucosaminyl-(1-&gt;4)]-N-acetyl-alpha-D-muramoyl-L-alanyl-D-glutamyl-meso-2,6-diaminopimeloyl-D-alanyl-D-alanine + UDP + H(+). It functions in the pathway cell wall biogenesis; peptidoglycan biosynthesis. In terms of biological role, cell wall formation. Catalyzes the transfer of a GlcNAc subunit on undecaprenyl-pyrophosphoryl-MurNAc-pentapeptide (lipid intermediate I) to form undecaprenyl-pyrophosphoryl-MurNAc-(pentapeptide)GlcNAc (lipid intermediate II). The chain is UDP-N-acetylglucosamine--N-acetylmuramyl-(pentapeptide) pyrophosphoryl-undecaprenol N-acetylglucosamine transferase from Rhodopseudomonas palustris (strain HaA2).